The chain runs to 44 residues: Small ribosomal subunit protein eS31 (44 aa).

The Zn(2+) site is built by Cys18, Cys21, Cys35, and Cys38. The C4-type zinc finger occupies 18-38; it reads CPRCGDTVLAEHEDRQHCGKC.

Belongs to the eukaryotic ribosomal protein eS31 family. Part of the 30S ribosomal subunit. Zn(2+) serves as cofactor.

The protein is Small ribosomal subunit protein eS31 of Haloarcula marismortui (strain ATCC 43049 / DSM 3752 / JCM 8966 / VKM B-1809) (Halobacterium marismortui).